Reading from the N-terminus, the 143-residue chain is Monothiol glutaredoxin-5, mitochondrial (143 aa).

Residues 1–28 (MFGRISTRALLRPAFTHRIPSVSLSRFL) constitute a mitochondrion transit peptide. The region spanning 33 to 138 (KQAIESAIES…KLLEDADALV (106 aa)) is the Glutaredoxin domain. A glutathione-binding site is contributed by Lys-50. Cys-58 contacts [2Fe-2S] cluster. Residues 90 to 94 (REGVK), Ile-102, and 115 to 116 (CD) each bind glutathione.

Belongs to the glutaredoxin family. Monothiol subfamily. In terms of assembly, homodimer.

The protein localises to the mitochondrion matrix. Its function is as follows. Monothiol glutaredoxin involved in mitochondrial iron-sulfur (Fe/S) cluster transfer. Receives iron-sulfur clusters from scaffold protein ISU1 and mediates their transfer to apoproteins, to the 4Fe/FS cluster biosynthesis machinery, or export from mitochondrion. The sequence is that of Monothiol glutaredoxin-5, mitochondrial (GRX5) from Lachancea kluyveri (Yeast).